The sequence spans 182 residues: MEQGKHLAGLILAITLLQGTMAQLKEGKHSVLLDDNREDGSVLLTCGLPDQNIRWFKDGKEICSLNNSRSTCNLGSSSKDPRGIYWCEGSKENSKRLQVYYRMCQNCIELNSATVSGFIFTEIISLFFLAVGVYFIAGQDGVRQSRASDKQTLLSNDQLYQPLKDREDDQYSHLQGNNSRKN.

Residues 1 to 22 form the signal peptide; sequence MEQGKHLAGLILAITLLQGTMA. The Ig-like domain occupies 23-98; that stretch reads QLKEGKHSVL…GSKENSKRLQ (76 aa). Residues 23 to 116 lie on the Extracellular side of the membrane; sequence QLKEGKHSVL…CIELNSATVS (94 aa). Cys-46 and Cys-87 are joined by a disulfide. Residue Asn-66 is glycosylated (N-linked (GlcNAc...) asparagine). Residues 117–137 traverse the membrane as a helical segment; sequence GFIFTEIISLFFLAVGVYFIA. Over 138-182 the chain is Cytoplasmic; that stretch reads GQDGVRQSRASDKQTLLSNDQLYQPLKDREDDQYSHLQGNNSRKN. Ser-145 bears the Phosphoserine mark. Ser-148 carries the post-translational modification Phosphoserine; by PKC. Positions 149–177 constitute an ITAM domain; the sequence is DKQTLLSNDQLYQPLKDREDDQYSHLQGN. The short motif at 153 to 154 is the Di-leucine motif element; that stretch reads LL.

As to quaternary structure, the TCR-CD3 complex is composed of a CD3D/CD3E and a CD3G/CD3E heterodimers that preferentially associate with TCRalpha and TCRbeta, respectively, to form TCRalpha/CD3E/CD3G and TCRbeta/CD3G/CD3E trimers. In turn, the hexamer interacts with CD3Z homodimer to form the TCR-CD3 complex. Alternatively, TCRalpha and TCRbeta can be replaced by TCRgamma and TCRdelta. In terms of processing, phosphorylated on Tyr residues after T-cell receptor triggering by LCK in association with CD4/CD8. Phosphorylated also by PKC; leading to the TCR complex down-regulation. Post-translationally, phosphorylated on Tyr residues after T-cell receptor triggering by LCK in association with CD4/CD8.

The protein resides in the cell membrane. Its function is as follows. Part of the TCR-CD3 complex present on T-lymphocyte cell surface that plays an essential role in adaptive immune response. When antigen presenting cells (APCs) activate T-cell receptor (TCR), TCR-mediated signals are transmitted across the cell membrane by the CD3 chains CD3D, CD3E, CD3G and CD3Z. All CD3 chains contain immunoreceptor tyrosine-based activation motifs (ITAMs) in their cytoplasmic domain. Upon TCR engagement, these motifs become phosphorylated by Src family protein tyrosine kinases LCK and FYN, resulting in the activation of downstream signaling pathways. In addition to this role of signal transduction in T-cell activation, CD3G plays an essential role in the dynamic regulation of TCR expression at the cell surface. Indeed, constitutive TCR cycling is dependent on the di-leucine-based (diL) receptor-sorting motif present in CD3G. In Sus scrofa (Pig), this protein is T-cell surface glycoprotein CD3 gamma chain (CD3G).